The primary structure comprises 305 residues: Acetylglutamate kinase (305 aa).

Substrate-binding positions include G67 to G68, R89, and N190.

Belongs to the acetylglutamate kinase family. ArgB subfamily.

Its subcellular location is the cytoplasm. It carries out the reaction N-acetyl-L-glutamate + ATP = N-acetyl-L-glutamyl 5-phosphate + ADP. It functions in the pathway amino-acid biosynthesis; L-arginine biosynthesis; N(2)-acetyl-L-ornithine from L-glutamate: step 2/4. Functionally, catalyzes the ATP-dependent phosphorylation of N-acetyl-L-glutamate. The protein is Acetylglutamate kinase of Bifidobacterium longum subsp. infantis (strain ATCC 15697 / DSM 20088 / JCM 1222 / NCTC 11817 / S12).